Consider the following 430-residue polypeptide: Adenylosuccinate synthetase (430 aa).

GTP-binding positions include 12–18 and 40–42; these read GDEGKGK and GHT. The active-site Proton acceptor is the Asp-13. 2 residues coordinate Mg(2+): Asp-13 and Gly-40. IMP contacts are provided by residues 13-16, 38-41, Thr-128, Arg-142, Gln-223, Thr-238, and Arg-302; these read DEGK and NAGH. His-41 functions as the Proton donor in the catalytic mechanism. 298–304 serves as a coordination point for substrate; the sequence is TTTGRPR. Residues Arg-304, 330–332, and 412–414 contribute to the GTP site; these read SID and SVG.

The protein belongs to the adenylosuccinate synthetase family. Homodimer. Requires Mg(2+) as cofactor.

The protein localises to the cytoplasm. It catalyses the reaction IMP + L-aspartate + GTP = N(6)-(1,2-dicarboxyethyl)-AMP + GDP + phosphate + 2 H(+). The protein operates within purine metabolism; AMP biosynthesis via de novo pathway; AMP from IMP: step 1/2. Functionally, plays an important role in the de novo pathway of purine nucleotide biosynthesis. Catalyzes the first committed step in the biosynthesis of AMP from IMP. The chain is Adenylosuccinate synthetase from Bacillus licheniformis (strain ATCC 14580 / DSM 13 / JCM 2505 / CCUG 7422 / NBRC 12200 / NCIMB 9375 / NCTC 10341 / NRRL NRS-1264 / Gibson 46).